The following is a 214-amino-acid chain: Adenylate kinase (214 aa).

10 to 15 (GAGKGT) serves as a coordination point for ATP. The NMP stretch occupies residues 30 to 59 (STGDILRAAVKDMTPMGGKAKSFMDAGALV). AMP-binding positions include Thr-31, Arg-36, 57 to 59 (ALV), 85 to 88 (GFPR), and Gln-92. The tract at residues 126–163 (GRRTCRNCGKGFHVSFDPPKSSGICDECSGELYQRDDD) is LID. Arg-127 lines the ATP pocket. Zn(2+)-binding residues include Cys-130, Cys-133, Cys-150, and Cys-153. AMP contacts are provided by Arg-160 and Arg-171. Gly-199 contacts ATP.

It belongs to the adenylate kinase family. In terms of assembly, monomer.

It localises to the cytoplasm. It carries out the reaction AMP + ATP = 2 ADP. Its pathway is purine metabolism; AMP biosynthesis via salvage pathway; AMP from ADP: step 1/1. Its function is as follows. Catalyzes the reversible transfer of the terminal phosphate group between ATP and AMP. Plays an important role in cellular energy homeostasis and in adenine nucleotide metabolism. This is Adenylate kinase from Geotalea daltonii (strain DSM 22248 / JCM 15807 / FRC-32) (Geobacter daltonii).